We begin with the raw amino-acid sequence, 361 residues long: Phospho-N-acetylmuramoyl-pentapeptide-transferase (361 aa).

Helical transmembrane passes span 17–37 (SIYLRAFLGFVISFCIVLFAG), 66–86 (GTPTMGGVLIIAAVLLTSIFI), 90–110 (TNSLILLVLLSTIMFAAIGFI), 129–149 (LLFQGAIGLIIWAYIYFIGLT), 162–182 (ISAYPYYIGAIGLFFLIQIVL), 197–217 (GLAIMPMIICSTILGVIAYFT), 232–252 (VGSGELSVFLSAVTGAGLGFL), 261–281 (IFMGDTGSLTLGGILGVIAII), 286–306 (LMLPIMGFIFVLEALSVILQV), and 340–360 (FWIGTLIFGIIALGAIKMRGI).

This sequence belongs to the glycosyltransferase 4 family. MraY subfamily. It depends on Mg(2+) as a cofactor.

It is found in the cell inner membrane. It catalyses the reaction UDP-N-acetyl-alpha-D-muramoyl-L-alanyl-gamma-D-glutamyl-meso-2,6-diaminopimeloyl-D-alanyl-D-alanine + di-trans,octa-cis-undecaprenyl phosphate = di-trans,octa-cis-undecaprenyl diphospho-N-acetyl-alpha-D-muramoyl-L-alanyl-D-glutamyl-meso-2,6-diaminopimeloyl-D-alanyl-D-alanine + UMP. It participates in cell wall biogenesis; peptidoglycan biosynthesis. Functionally, catalyzes the initial step of the lipid cycle reactions in the biosynthesis of the cell wall peptidoglycan: transfers peptidoglycan precursor phospho-MurNAc-pentapeptide from UDP-MurNAc-pentapeptide onto the lipid carrier undecaprenyl phosphate, yielding undecaprenyl-pyrophosphoryl-MurNAc-pentapeptide, known as lipid I. The polypeptide is Phospho-N-acetylmuramoyl-pentapeptide-transferase (Fusobacterium nucleatum subsp. nucleatum (strain ATCC 25586 / DSM 15643 / BCRC 10681 / CIP 101130 / JCM 8532 / KCTC 2640 / LMG 13131 / VPI 4355)).